The primary structure comprises 115 residues: Large ribosomal subunit protein bL20 (115 aa).

This sequence belongs to the bacterial ribosomal protein bL20 family.

Its function is as follows. Binds directly to 23S ribosomal RNA and is necessary for the in vitro assembly process of the 50S ribosomal subunit. It is not involved in the protein synthesizing functions of that subunit. This is Large ribosomal subunit protein bL20 from Microcystis aeruginosa (strain NIES-843 / IAM M-2473).